The following is a 168-amino-acid chain: DNA damage-inducible transcript 3 protein (168 aa).

Residues 10–18 (FETVSSWEL) are interaction with TRIB3. Positions 10–26 (FETVSSWELEAWYEDLQ) are N-terminal. Phosphoserine; by CK2 is present on residues S14, S15, S30, and S31. The interval 34-130 (IGGTYISSPG…EKEQENERKV (97 aa)) is disordered. Residues 73–88 (TSTSQSPRSPDSSQSS) show a composition bias toward low complexity. Residues S78 and S81 each carry the phosphoserine; by MAPK14 modification. Positions 98–161 (QGRTRKRKQS…ETTRRALIDR (64 aa)) constitute a bZIP domain. Positions 100-129 (RTRKRKQSGQCAARAGKQRMKEKEQENERK) are basic motif. Positions 118–130 (RMKEKEQENERKV) are enriched in basic and acidic residues. Positions 133-147 (LAEENERLKLEIERL) are leucine-zipper.

It belongs to the bZIP family. Heterodimer. Interacts with TCF7L2/TCF4, EP300/P300, HDAC1, HDAC5 and HDAC6. Interacts with TRIB3 which blocks its association with EP300/P300. Interacts with FOXO3, CEBPB and ATF4. Ubiquitinated, leading to its degradation by the proteasome. In terms of processing, phosphorylation at serine residues by MAPK14 enhances its transcriptional activation activity while phosphorylation at serine residues by CK2 inhibits its transcriptional activation activity.

It is found in the cytoplasm. The protein localises to the nucleus. Its function is as follows. Multifunctional transcription factor in ER stress response. Plays an essential role in the response to a wide variety of cell stresses and induces cell cycle arrest and apoptosis in response to ER stress. Plays a dual role both as an inhibitor of CCAAT/enhancer-binding protein (C/EBP) function and as an activator of other genes. Acts as a dominant-negative regulator of C/EBP-induced transcription: dimerizes with members of the C/EBP family, impairs their association with C/EBP binding sites in the promoter regions, and inhibits the expression of C/EBP regulated genes. Positively regulates the transcription of TRIB3, IL6, IL8, IL23, TNFRSF10B/DR5, PPP1R15A/GADD34, BBC3/PUMA, BCL2L11/BIM and ERO1L. Negatively regulates; expression of BCL2 and MYOD1, ATF4-dependent transcriptional activation of asparagine synthetase (ASNS), CEBPA-dependent transcriptional activation of hepcidin (HAMP) and CEBPB-mediated expression of peroxisome proliferator-activated receptor gamma (PPARG). Inhibits the canonical Wnt signaling pathway by binding to TCF7L2/TCF4, impairing its DNA-binding properties and repressing its transcriptional activity. Plays a regulatory role in the inflammatory response through the induction of caspase-11 (CASP4/CASP11) which induces the activation of caspase-1 (CASP1) and both these caspases increase the activation of pro-IL1B to mature IL1B which is involved in the inflammatory response. Acts as a major regulator of postnatal neovascularization through regulation of endothelial nitric oxide synthase (NOS3)-related signaling. The polypeptide is DNA damage-inducible transcript 3 protein (Ddit3) (Rattus norvegicus (Rat)).